Here is a 613-residue protein sequence, read N- to C-terminus: Dihydroxy-acid dehydratase (613 aa).

Residue Asp81 participates in Mg(2+) binding. Cys122 lines the [2Fe-2S] cluster pocket. The Mg(2+) site is built by Asp123 and Lys124. Lys124 carries the post-translational modification N6-carboxylysine. Cys193 contacts [2Fe-2S] cluster. Glu489 contacts Mg(2+). Ser515 acts as the Proton acceptor in catalysis.

The protein belongs to the IlvD/Edd family. In terms of assembly, homodimer. Requires [2Fe-2S] cluster as cofactor. Mg(2+) is required as a cofactor.

The enzyme catalyses (2R)-2,3-dihydroxy-3-methylbutanoate = 3-methyl-2-oxobutanoate + H2O. It catalyses the reaction (2R,3R)-2,3-dihydroxy-3-methylpentanoate = (S)-3-methyl-2-oxopentanoate + H2O. It functions in the pathway amino-acid biosynthesis; L-isoleucine biosynthesis; L-isoleucine from 2-oxobutanoate: step 3/4. Its pathway is amino-acid biosynthesis; L-valine biosynthesis; L-valine from pyruvate: step 3/4. Functionally, functions in the biosynthesis of branched-chain amino acids. Catalyzes the dehydration of (2R,3R)-2,3-dihydroxy-3-methylpentanoate (2,3-dihydroxy-3-methylvalerate) into 2-oxo-3-methylpentanoate (2-oxo-3-methylvalerate) and of (2R)-2,3-dihydroxy-3-methylbutanoate (2,3-dihydroxyisovalerate) into 2-oxo-3-methylbutanoate (2-oxoisovalerate), the penultimate precursor to L-isoleucine and L-valine, respectively. This chain is Dihydroxy-acid dehydratase, found in Pseudomonas fluorescens (strain ATCC BAA-477 / NRRL B-23932 / Pf-5).